We begin with the raw amino-acid sequence, 592 residues long: UPF0329 protein ECU01_0110/ECU01_1500/ECU08_0040 (592 aa).

2 stretches are compositionally biased toward basic and acidic residues: residues 306–339 and 353–362; these read RQRRREREIEKNMKELMRDEEKAKSKEKAKSKEK and EAKEEEKKES. The disordered stretch occupies residues 306 to 404; sequence RQRRREREIE…RKRYKIHRRV (99 aa).

This sequence belongs to the UPF0329 family.

This Encephalitozoon cuniculi (strain GB-M1) (Microsporidian parasite) protein is UPF0329 protein ECU01_0110/ECU01_1500/ECU08_0040.